A 517-amino-acid polypeptide reads, in one-letter code: Urethanase (517 aa).

Residues Lys98 and Ser173 each act as charge relay system in the active site. The active-site Acyl-ester intermediate is the Ser197.

Belongs to the amidase family. In terms of assembly, homooctamer.

The enzyme catalyses urethane + H2O + H(+) = ethanol + NH4(+) + CO2. Exhibits poor salt tolerance but excellent tolerance to low concentrations of ethanol. EDTA has almost no impact on activity. Activity is increased in the presence of Ca(2+), Mg(2+) and Co(3+) and inhibited in the presence of Al(3+), Zn(2+) and Cu(2+). In terms of biological role, hydrolase that can catalyze the degradation of ethyl carbamate (also called urethane), a probable human carcinogen widely found in alcoholic beverages. Can also use methyl carbamate, butyl carbamate, acetamide and urea. Also catalyzes the enantioselective hydrolysis of 2-phenylpropionamide, alpha-chlorophenylacetamide, 2-methyl-3-phenylpropionamide and alpha-methoxyphenylacetamide to the corresponding acids. Is inactive on benzamide and L-glutamine. This chain is Urethanase, found in Rhizobium radiobacter (Agrobacterium tumefaciens).